The primary structure comprises 324 residues: Quinolinate synthase 2 (324 aa).

Iminosuccinate contacts are provided by histidine 48 and serine 66. Cysteine 111 lines the [4Fe-4S] cluster pocket. Residues tyrosine 137 to asparagine 139 and serine 154 contribute to the iminosuccinate site. Cysteine 196 provides a ligand contact to [4Fe-4S] cluster. Iminosuccinate contacts are provided by residues histidine 222–glutamate 224 and threonine 239. Cysteine 282 is a binding site for [4Fe-4S] cluster.

The protein belongs to the quinolinate synthase family. Type 2 subfamily. [4Fe-4S] cluster serves as cofactor.

It is found in the cytoplasm. It catalyses the reaction iminosuccinate + dihydroxyacetone phosphate = quinolinate + phosphate + 2 H2O + H(+). It participates in cofactor biosynthesis; NAD(+) biosynthesis; quinolinate from iminoaspartate: step 1/1. Functionally, catalyzes the condensation of iminoaspartate with dihydroxyacetone phosphate to form quinolinate. The sequence is that of Quinolinate synthase 2 from Mesorhizobium japonicum (strain LMG 29417 / CECT 9101 / MAFF 303099) (Mesorhizobium loti (strain MAFF 303099)).